The primary structure comprises 433 residues: Transcription factor elt-2 (433 aa).

Disordered regions lie at residues 1–47 and 194–235; these read MDNN…ELPR and GQPP…RQGL. Residues 27-43 show a composition bias toward polar residues; sequence PTQNMDPPEQNNESQLS. Low complexity predominate over residues 211–234; it reads AKQSSKKSSSSNRGSNGSASRRQG. A GATA-type zinc finger spans residues 237 to 261; the sequence is CSNCNGTNTTLWRRNAEGDPVCNAC. Residues 275–332 form a disordered region; that stretch reads SMKKEGALQTRKRKSKSGDSSTPSTSRARERKFERASSSTEKAQRSSNRRAGSAKADR. The span at 310–324 shows a compositional bias: polar residues; the sequence is ASSSTEKAQRSSNRR.

As to quaternary structure, interacts with lag-1. Interacts with pha-4. Interacts with rpt-6. May be ubiquitinated in response to infection by B.pseudomallei. In terms of tissue distribution, expressed in the intestine.

Its subcellular location is the nucleus. Functionally, transcriptional activator that binds to the consensus sequence 5'-[AT]GATA[AG]-3'. Predominantly directs the transcription of intestinal genes such as ges-1, cpr-6, pho-1, ftn-1, vit-2 and lev-11, and itself. Required for gut-specific differentiation, specifically acting with the GATA region-binding transcription factor elt-7 to control normal gene expression and promote normal formation of the intestine. Regulates intestinal gene expression in response to hypoxia to promote longevity. Modulation of longevity may, in part, be the result of regulation of expression of daf-16 isoforms d and f in the intestine. Regulates tissue specific gene expression at basal levels and in response to bacterial infection in the intestine to control innate immunity. Plays a role in the induction of metal-responsive genes, activating gene expression from zinc-activated promoters and iron-dependent promoters and enhancers. May regulate the expression of genes that control sensitivity to oxidative stress, in a mab-3-dependent manner, and osmotic stress, in conjunction with the GATA region-binding transcription factor elt-3. May play a role in sphingolipid signaling by regulating the expression of the sphingosine-1-phosphate degrading enzyme, sphingosine-1-phosphate lyase. May act with the Notch signaling pathway to promote endodermal gene expression. Has a protective role in response to infection by Gram-negative bacteria such as S.enterica, E.coli, P.aeruginosa and B.pseudomallei, Gram-positive bacterium E.faecalis and fungal pathogen C.neoformans. An association with the 26S proteasome regulatory subunit rpt-6, in part, controls gene expression in response to infection by P.aeruginosa. Regulates gene expression during the recovery phase following a bacterial infection. May act with p38-activated transcription factors to control p38 gene induction in response to bacterial infection. Controls lysosome formation in the intestine by controlling lysosomal gene expression. This chain is Transcription factor elt-2, found in Caenorhabditis elegans.